Reading from the N-terminus, the 484-residue chain is MAKAATPKKTAAVNGAGKVTQVIGAVVDVAFEGELPPILNALETQNNGNRLVLEVAQHLGENVVRTIAMDSTEGLVRGQSVADTGAPIEVPVGLETLGRIMNVIGEPVDEAGPIVTAKKRAIHQDAPSYVEQSTEGQILVTGIKVVDLLAPYAKGGKIGLFGGAGVGKTVLIMELINNVAKAHGGYSVFAGVGERTREGNDLYHEMIESNVNKLGGGEGSKAALVYGQMNEPPGARARVALTGLTIAENFRDEGQDVLFFVDNIFRFTQAGSEVSALLGRIPSAVGYQPTLATDMGQMQERITTTNKGSITSVQAIYVPADDLTDPAPATSFAHLDATTVLSRSIAEKGIYPAVDPLDSTSRMLDPMIVGEEHYEVARKVQSTLQRYKSLQDIIAILGMDELSEEDKLTVARARKIERFLSQPFFVAEVFTGSPGKLVALEDTIKGFKGLVNGEYDSLPEAAFYMVGSMEEAIEKAKKLTAEAA.

Position 162 to 169 (Gly-162 to Thr-169) interacts with ATP.

Belongs to the ATPase alpha/beta chains family. In terms of assembly, F-type ATPases have 2 components, CF(1) - the catalytic core - and CF(0) - the membrane proton channel. CF(1) has five subunits: alpha(3), beta(3), gamma(1), delta(1), epsilon(1). CF(0) has three main subunits: a(1), b(2) and c(9-12). The alpha and beta chains form an alternating ring which encloses part of the gamma chain. CF(1) is attached to CF(0) by a central stalk formed by the gamma and epsilon chains, while a peripheral stalk is formed by the delta and b chains.

Its subcellular location is the cell inner membrane. The enzyme catalyses ATP + H2O + 4 H(+)(in) = ADP + phosphate + 5 H(+)(out). Functionally, produces ATP from ADP in the presence of a proton gradient across the membrane. The catalytic sites are hosted primarily by the beta subunits. This Agrobacterium fabrum (strain C58 / ATCC 33970) (Agrobacterium tumefaciens (strain C58)) protein is ATP synthase subunit beta.